The primary structure comprises 221 residues: Sugar transporter SWEET1 (221 aa).

The next 7 helical transmembrane spans lie at 3–23 (AGGFLDSLIYGACVVFTLGMF), 42–62 (VQFLPFLTTEVNNLGWLSYGA), 68–88 (ILIVVNTVGAALQTLYILAYL), 96–116 (VVLLQTATLLGVLLLGYGYFW), 129–149 (LGLFCSVFTISMYLSPLADLA), 160–180 (LSYPLTIATLLTSASWCLYGF), and 186–206 (YIMVSNFPGIVTSFIRFWLFW). The region spanning 10–94 (LIYGACVVFT…LAYLHYCPRK (85 aa)) is the MtN3/slv 1 domain. Positions 127-212 (QQLGLFCSVF…WLFWKYPQEQ (86 aa)) constitute a MtN3/slv 2 domain. Residues 149–221 (AKVIQTKSTQ…QDRNYWLLQT (73 aa)) form a mediates interaction with TRPV2 region.

Belongs to the SWEET sugar transporter family. As to quaternary structure, interacts with TRPV2; the interaction probably occurs intracellularly and depends on TRPV2 N-glycosylation. Ubiquitously expressed with highest expression in oviduct, epididymis and intestine.

It localises to the golgi apparatus membrane. The protein localises to the cell membrane. Functionally, mediates sugar transport across membranes. May stimulate V(D)J recombination by the activation of RAG1. This Homo sapiens (Human) protein is Sugar transporter SWEET1 (SLC50A1).